The primary structure comprises 425 residues: Enolase (425 aa).

Residue Gln-163 participates in (2R)-2-phosphoglycerate binding. The Proton donor role is filled by Glu-205. Mg(2+)-binding residues include Asp-242, Glu-285, and Asp-312. Lys-337, Arg-366, Ser-367, and Lys-388 together coordinate (2R)-2-phosphoglycerate. Lys-337 functions as the Proton acceptor in the catalytic mechanism.

This sequence belongs to the enolase family. Mg(2+) is required as a cofactor.

The protein localises to the cytoplasm. Its subcellular location is the secreted. It is found in the cell surface. The enzyme catalyses (2R)-2-phosphoglycerate = phosphoenolpyruvate + H2O. Its pathway is carbohydrate degradation; glycolysis; pyruvate from D-glyceraldehyde 3-phosphate: step 4/5. Functionally, catalyzes the reversible conversion of 2-phosphoglycerate (2-PG) into phosphoenolpyruvate (PEP). It is essential for the degradation of carbohydrates via glycolysis. This Granulibacter bethesdensis (strain ATCC BAA-1260 / CGDNIH1) protein is Enolase.